The chain runs to 521 residues: Bifunctional purine biosynthesis protein PurH (521 aa).

Positions methionine 1–valine 145 constitute an MGS-like domain.

It belongs to the PurH family.

The catalysed reaction is (6R)-10-formyltetrahydrofolate + 5-amino-1-(5-phospho-beta-D-ribosyl)imidazole-4-carboxamide = 5-formamido-1-(5-phospho-D-ribosyl)imidazole-4-carboxamide + (6S)-5,6,7,8-tetrahydrofolate. It carries out the reaction IMP + H2O = 5-formamido-1-(5-phospho-D-ribosyl)imidazole-4-carboxamide. Its pathway is purine metabolism; IMP biosynthesis via de novo pathway; 5-formamido-1-(5-phospho-D-ribosyl)imidazole-4-carboxamide from 5-amino-1-(5-phospho-D-ribosyl)imidazole-4-carboxamide (10-formyl THF route): step 1/1. It functions in the pathway purine metabolism; IMP biosynthesis via de novo pathway; IMP from 5-formamido-1-(5-phospho-D-ribosyl)imidazole-4-carboxamide: step 1/1. In Burkholderia multivorans (strain ATCC 17616 / 249), this protein is Bifunctional purine biosynthesis protein PurH.